Consider the following 248-residue polypeptide: Large ribosomal subunit protein bL9m (248 aa).

A mitochondrion-targeting transit peptide spans 1 to 25; the sequence is MLKNIYVTPLNLLKSATSLQQQVRT.

The protein belongs to the bacterial ribosomal protein bL9 family. As to quaternary structure, component of the mitochondrial ribosome large subunit (39S) which comprises a 16S rRNA and about 50 distinct proteins.

The protein resides in the mitochondrion. This is Large ribosomal subunit protein bL9m (mRpL9) from Drosophila melanogaster (Fruit fly).